Reading from the N-terminus, the 660-residue chain is Macrolide export ATP-binding/permease protein MacB (660 aa).

Residues 10–248 (LVLENIVRKF…AKGQALQGKQ (239 aa)) enclose the ABC transporter domain. ATP is bound at residue 46-53 (GASGSGKS). A run of 4 helical transmembrane segments spans residues 285–305 (FLTM…VALG), 532–552 (ILTL…GIGV), 593–613 (IIGG…FVLF), and 625–645 (SIII…FSPA).

It belongs to the ABC transporter superfamily. Macrolide exporter (TC 3.A.1.122) family. Homodimer.

The protein localises to the cell inner membrane. Functionally, non-canonical ABC transporter that contains transmembrane domains (TMD), which form a pore in the inner membrane, and an ATP-binding domain (NBD), which is responsible for energy generation. Confers resistance against macrolides. The sequence is that of Macrolide export ATP-binding/permease protein MacB from Bartonella quintana (strain Toulouse) (Rochalimaea quintana).